Here is an 880-residue protein sequence, read N- to C-terminus: MSEKIIRGVKFGVLSPNEIRQMSVTAIITSEVYDEDGTPIEGGVMDPKLGVIEPGQKCPVCGNTLAGCPGHFGHIELIKPVIHIGYVKHIYDFLRSTCWRCGRIKIKEQDLERYKRIYNAIKLRWPSAARRLVEYIKKISIKNLECPHCGEKQFKIKLEKPYNFNEERNGSIVKLSPSEIRDRLERIPDSDVELLGYDPKSSRPEWMILTVLPVPPITIRPSITIESGIRAEDDLTHKLVDIIRLNERLKESIEAGAPQLIIEDLWDLLQYHVATYFDNEIPGLPPAKHRSGRPLRTLAQRLKGKEGRFRGNLSGKRVDFSARTVISPDPNLSIDEVGIPYTIARMLTVPERVTNINIERIRQYIINGPDKWPGANYVIKPDGRRIDLRYVKDRKELASSITAGYVVERHLVDGDVVLFNRQPSLHRISMMAHKVRVLPGRTFRLNLLDCPPYNADFDGDEMNLHVPQSEEAIAEARELMLVHKNIITPRYGGPIIGGGQDYISGAYLLSVKTTLLTVEEVATILGVTDFVGELGEPAILAPKPYYTGKQVISLFLPKDFNFHGPANISKGPRACKDEICPHDSFIVIKNGLLLEGVFDKKAIGNQQPESMLHWSIREYGTEYGKWLMDNVFKMFIRFLEMRGFTMTLEDITIPDEAQNEITTKIKEGYSQVDEYIRKFNEGQLEPIPGRTIEESLESYILDTLDKLRKVAGEIATKYLDPFNNVYIMAITGARGSELNITQMTALLGQQSVRGERIRRGYRERTLSLFKYGDIAPEARGFVKNSFMRGLSPYEMFFHAAGGREGLVDTAVKTSQSGYMQRRLINALSDLRIEYDGTVRSLYGDIVQVVYGDDAVHPMYSAHSKSVNVNRVIERVIGWKR.

8 residues coordinate Zn(2+): Cys-58, Cys-61, Cys-68, His-71, Cys-98, Cys-101, Cys-146, and Cys-149. Residues Asp-456, Asp-458, and Asp-460 each contribute to the Mg(2+) site. Zn(2+) is bound by residues Arg-573, Cys-575, Cys-580, His-582, and Ser-584.

Belongs to the RNA polymerase beta' chain family. In terms of assembly, part of the 13-subunit RNA polymerase complex. Interacts with TFS4. As to quaternary structure, (Microbial infection) Binds viral protein RIP, which blocks global transcription. Mg(2+) is required as a cofactor. Zn(2+) serves as cofactor.

The protein localises to the cytoplasm. It carries out the reaction RNA(n) + a ribonucleoside 5'-triphosphate = RNA(n+1) + diphosphate. Its activity is regulated as follows. (Microbial infection) Binds to viral protein RIP (AC Q3V4R7), which inhibits global transcription. Functionally, DNA-dependent RNA polymerase (RNAP) catalyzes the transcription of DNA into RNA using the four ribonucleoside triphosphates as substrates. Forms the clamp head domain. This chain is DNA-directed RNA polymerase subunit Rpo1N, found in Sulfolobus acidocaldarius (strain ATCC 33909 / DSM 639 / JCM 8929 / NBRC 15157 / NCIMB 11770).